The sequence spans 382 residues: Cholinephosphotransferase 1 (382 aa).

The Cytoplasmic segment spans residues 1–51; the sequence is MPQCECPEPLSAVQLKRLEEHKYSAAGRSLFEPPCQIYWNWLVQQIPTWVA. The helical transmembrane segment at 52–72 threads the bilayer; the sequence is PNTLTTIGLVINVITTVILVY. A CDP-choline-binding site is contributed by N53. Residues 73-82 lie on the Lumenal side of the membrane; sequence YSPTATEEVP. Residues 83-107 traverse the membrane as a helical segment; it reads GWAFFLSALGLFIYQSLDAIDGKQA. Mg(2+) contacts are provided by D100 and D103. R108 serves as a coordination point for CDP-choline. Topologically, residues 108-114 are cytoplasmic; sequence RRTNSSS. A helical membrane pass occupies residues 115-139; the sequence is ALGELFDHGCDAVSTVFVAVGTCIC. D121 is a Mg(2+) binding site. The active-site Proton acceptor is H122. A Mg(2+)-binding site is contributed by D125. Topologically, residues 140–149 are lumenal; sequence CGIGAYPNWM. The chain crosses the membrane as a helical span at residues 150 to 168; it reads FFCGFVGMFMFFCAHWQTY. The Cytoplasmic segment spans residues 169–179; the sequence is VSGTLRFGLVD. The chain crosses the membrane as a helical span at residues 180–196; sequence VTEVQIAIIIMYLLTAF. Over 197–211 the chain is Lumenal; that stretch reads TGVSFWEMRVPVLGV. Residues 212-237 traverse the membrane as a helical segment; sequence NLQTFPILGIIGGFLYSTYNYFFVIM. At 238-254 the chain is on the cytoplasmic side; that stretch reads NGGVGKNGSTVADTSVL. Residues 255 to 270 traverse the membrane as a helical segment; it reads TPGLHIGLILTLAFII. The Lumenal portion of the chain corresponds to 271–282; the sequence is FKKSSSHLFEHH. A helical membrane pass occupies residues 283–305; it reads PCLYVLTFGMVIAKISNKLVVAH. The Cytoplasmic segment spans residues 306–318; sequence MTKSELHLQDTAF. The helical transmembrane segment at 319 to 328 threads the bilayer; that stretch reads IGPGLLFLNQ. Topologically, residues 329–335 are lumenal; sequence YFNSYID. The helical transmembrane segment at 336-365 threads the bilayer; sequence EHIVLWIAMVLSLVDLVRYCTAVCLQIASH. Residues 366 to 382 are Cytoplasmic-facing; that stretch reads LRIRVFSISPQGHAHKD.

The protein belongs to the CDP-alcohol phosphatidyltransferase class-I family. Requires Mg(2+) as cofactor. Mn(2+) is required as a cofactor.

It localises to the golgi apparatus membrane. It catalyses the reaction CDP-choline + a 1,2-diacyl-sn-glycerol = a 1,2-diacyl-sn-glycero-3-phosphocholine + CMP + H(+). The enzyme catalyses 1-octadecanoyl-2-(5Z,8Z,11Z,14Z-eicosatetraenoyl)-sn-glycerol + CDP-choline = 1-octadecanoyl-2-(5Z,8Z,11Z,14Z-eicosatetraenoyl)-sn-glycero-3-phosphocholine + CMP + H(+). It carries out the reaction 1-hexadecanoyl-2-(9Z-octadecenoyl)-sn-glycerol + CDP-choline = 1-hexadecanoyl-2-(9Z-octadecenoyl)-sn-glycero-3-phosphocholine + CMP + H(+). The catalysed reaction is 1-hexadecanoyl-2-(4Z,7Z,10Z,13Z,16Z,19Z-docosahexaenoyl)-sn-glycerol + CDP-choline = 1-hexadecanoyl-2-(4Z,7Z,10Z,13Z,16Z,19Z-docosahexaenoyl)-sn-glycero-3-phosphocholine + CMP + H(+). It catalyses the reaction 1,2-dioctanoyl-sn-glycerol + CDP-choline = 1,2-dioctanoyl-sn-glycero-3-phosphocholine + CMP + H(+). Its pathway is phospholipid metabolism; phosphatidylcholine biosynthesis; phosphatidylcholine from phosphocholine: step 2/2. Catalyzes the final step of de novo phosphatidylcholine (PC) synthesis, i.e. the transfer of choline phosphate from CDP-choline to the free hydroxyl of a diacylglycerol (DAG), producing a PC. It thereby plays a central role in the formation and maintenance of vesicular membranes. This Danio rerio (Zebrafish) protein is Cholinephosphotransferase 1 (chpt1).